The primary structure comprises 1328 residues: ABC transporter C family member 7 (1328 aa).

The ABC transmembrane type-1 1 domain occupies 104-389 (HKTSIIVQIF…LPQAIQRLLS (286 aa)). 6 consecutive transmembrane segments (helical) span residues 112–132 (IFSA…ILYV), 140–160 (SFLV…FLSI), 224–244 (LILL…CWTI), 245–265 (GYSG…STFL), 287–307 (ISEM…LFFI), and 333–353 (MVVQ…YTLI). One can recognise an ABC transporter 1 domain in the interval 457–678 (IELVNNDSIE…FDFESIMKTK (222 aa)). 490–497 (GVVGSGKS) provides a ligand contact to ATP. Over residues 684–695 (LNNSNNNNNNNN) the composition is skewed to low complexity. Residues 684–708 (LNNSNNNNNNNNNKEEEEDVENLEK) are disordered. The next 5 membrane-spanning stretches (helical) occupy residues 762 to 782 (FIFF…FLLF), 802 to 822 (DSFY…FLGI), 894 to 914 (VLMM…LALF), 988 to 1008 (IGIK…FFSL), and 1014 to 1034 (GLSV…NWCI). The region spanning 765 to 1046 (FFTMIMMYII…YIEFSMKMSS (282 aa)) is the ABC transmembrane type-1 2 domain. The ABC transporter 2 domain occupies 1083-1316 (IQFKNVEIKY…INNQNSKFKK (234 aa)). 1117–1124 (GKSGSGKS) serves as a coordination point for ATP.

Belongs to the ABC transporter superfamily. ABCC family. Conjugate transporter (TC 3.A.1.208) subfamily.

It is found in the membrane. The protein is ABC transporter C family member 7 (abcC7) of Dictyostelium discoideum (Social amoeba).